The primary structure comprises 699 residues: Elongation factor G (699 aa).

One can recognise a tr-type G domain in the interval 8–287; that stretch reads EKLRNIGIVA…AVIDYLPSPI (280 aa). Residues 17–24, 85–89, and 139–142 contribute to the GTP site; these read AHIDAGKT, DTPGH, and NKMD.

This sequence belongs to the TRAFAC class translation factor GTPase superfamily. Classic translation factor GTPase family. EF-G/EF-2 subfamily.

Its subcellular location is the cytoplasm. Catalyzes the GTP-dependent ribosomal translocation step during translation elongation. During this step, the ribosome changes from the pre-translocational (PRE) to the post-translocational (POST) state as the newly formed A-site-bound peptidyl-tRNA and P-site-bound deacylated tRNA move to the P and E sites, respectively. Catalyzes the coordinated movement of the two tRNA molecules, the mRNA and conformational changes in the ribosome. The protein is Elongation factor G (fusA) of Aquifex aeolicus (strain VF5).